The primary structure comprises 493 residues: Cytochrome P450 2E1 (493 aa).

Position 298–303 (298–303) interacts with substrate; it reads FAGTET. Cysteine 437 serves as a coordination point for heme.

The protein belongs to the cytochrome P450 family. In terms of assembly, interacts with chaperones HSP70 and HSP90; this interaction is required for initial targeting to mitochondria. Heme serves as cofactor.

It is found in the endoplasmic reticulum membrane. It localises to the microsome membrane. The protein resides in the mitochondrion inner membrane. It carries out the reaction an organic molecule + reduced [NADPH--hemoprotein reductase] + O2 = an alcohol + oxidized [NADPH--hemoprotein reductase] + H2O + H(+). The enzyme catalyses (5Z,8Z,11Z)-eicosatrienoate + reduced [NADPH--hemoprotein reductase] + O2 = 19-hydroxy-(5Z,8Z,11Z)-eicosatrienoate + oxidized [NADPH--hemoprotein reductase] + H2O + H(+). The catalysed reaction is (5Z,8Z,11Z,14Z,17Z)-eicosapentaenoate + reduced [NADPH--hemoprotein reductase] + O2 = 19-hydroxy-(5Z,8Z,11Z,14Z,17Z)-eicosapentaenoate + oxidized [NADPH--hemoprotein reductase] + H2O + H(+). It catalyses the reaction (4Z,7Z,10Z,13Z,16Z,19Z)-docosahexaenoate + reduced [NADPH--hemoprotein reductase] + O2 = 21-hydroxy-(4Z,7Z,10Z,13Z,16Z,19Z)-docosahexaenoate + oxidized [NADPH--hemoprotein reductase] + H2O + H(+). It carries out the reaction dodecanoate + reduced [NADPH--hemoprotein reductase] + O2 = 11-hydroxydodecanoate + oxidized [NADPH--hemoprotein reductase] + H2O + H(+). The enzyme catalyses tetradecanoate + reduced [NADPH--hemoprotein reductase] + O2 = 13-hydroxytetradecanoate + oxidized [NADPH--hemoprotein reductase] + H2O + H(+). The catalysed reaction is 4-nitrophenol + NADPH + O2 + H(+) = 4-nitrocatechol + NADP(+) + H2O. It participates in lipid metabolism; fatty acid metabolism. With respect to regulation, the omega-1 hydroxylase activity is stimulated by cytochrome b5. In terms of biological role, a cytochrome P450 monooxygenase involved in the metabolism of fatty acids. Mechanistically, uses molecular oxygen inserting one oxygen atom into a substrate, and reducing the second into a water molecule, with two electrons provided by NADPH via cytochrome P450 reductase (NADPH--hemoprotein reductase). Catalyzes the hydroxylation of carbon-hydrogen bonds. Hydroxylates fatty acids specifically at the omega-1 position displaying the highest catalytic activity for saturated fatty acids. May be involved in the oxidative metabolism of xenobiotics. The chain is Cytochrome P450 2E1 from Rattus norvegicus (Rat).